Consider the following 245-residue polypeptide: Dof zinc finger protein DOF3.2 (245 aa).

Over residues 15-26 the composition is skewed to polar residues; that stretch reads SCSTQDYQNQKK. Positions 15 to 41 are disordered; that stretch reads SCSTQDYQNQKKPLSATRPAPPEQSLR. Residues 40 to 94 form a Dof-type zinc finger; the sequence is LRCPRCDSTNTKFCYYNNYSLSQPRYFCKSCRRYWTKGGILRNIPIGGAYRKHKR. The Zn(2+) site is built by Cys-42, Cys-45, Cys-67, and Cys-70. A disordered region spans residues 91–118; sequence KHKRSSSATKSLRTTPEPTMTHDGKSFP. Over residues 96-108 the composition is skewed to polar residues; that stretch reads SSATKSLRTTPEP.

As to quaternary structure, interacts with TCP14. In terms of tissue distribution, the PEAR proteins (e.g. DOF2.4, DOF5.1, DOF3.2, DOF1.1, DOF5.6 and DOF5.3) form a short-range concentration gradient that peaks at protophloem sieve elements (PSE).

It localises to the nucleus. In terms of biological role, transcription factor that negatively affects seed germination and opposes TCP14 function in the regulation of a specific set of abscisic acid-related genes. The PEAR proteins (e.g. DOF2.4, DOF5.1, DOF3.2, DOF1.1, DOF5.6 and DOF5.3) activate gene expression that promotes radial growth of protophloem sieve elements. The chain is Dof zinc finger protein DOF3.2 from Arabidopsis thaliana (Mouse-ear cress).